The sequence spans 472 residues: Nuclear receptor subfamily 0 group B member 1 (472 aa).

3 repeat units span residues 1 to 67, 68 to 135, and 136 to 202. The segment at 1–255 is 4 X 67 AA tandem repeats; that stretch reads MAGEDHPWQG…RLITLKDPQV (255 aa). Short sequence motifs (LXXLL motif) lie at residues 13-17, 80-84, and 148-152; these read LYNLL, LYSML, and LYSLL. The 282-residue stretch at 190-471 folds into the NR LBD domain; sequence QSTQAMAFLY…DMMLEMLCAK (282 aa). The stretch at 203 to 255 is one 4; truncated repeat; the sequence is VCGEEQPQQISVASGTPVSADQTPATPQEQPRAPWWDASPGVQRLITLKDPQV. Residues 214–231 show a composition bias toward polar residues; that stretch reads VASGTPVSADQTPATPQE. 2 disordered regions span residues 214 to 238 and 324 to 343; these read VASGTPVSADQTPATPQEQPRAPWW and TTRRQETEGPEPAEPQATEQ. The AF-2 motif motif lies at 463 to 468; that stretch reads MMLEML.

This sequence belongs to the nuclear hormone receptor family. NR0 subfamily. As to quaternary structure, homodimer. Interacts with NR5A1, NR5A2, NR0B2 and with COPS2. Interacts with ESRRB; represses ESRRB activity at the GATA6 promoter. Expressed in adult cerebral cortex, spinal cord, thymus, heart, lung, ovary, testis, adrenal gland, hypothalamus, spleen and kidney.

Its subcellular location is the nucleus. It localises to the cytoplasm. Functionally, nuclear receptor that lacks a DNA-binding domain and acts as a corepressor that inhibits the transcriptional activity of other nuclear receptors through heterodimeric interactions. Component of a cascade required for the development of the hypothalamic-pituitary-adrenal-gonadal axis. May also have a role in the development of the embryo and in the maintenance of embryonic stem cell pluripotency. This chain is Nuclear receptor subfamily 0 group B member 1 (Nr0b1), found in Mus musculus (Mouse).